A 39-amino-acid chain; its full sequence is Conotoxin ArMSGL-013 (39 aa).

The propeptide occupies 1 to 5 (RRSLT). 3 disulfide bridges follow: Cys12–Cys24, Cys16–Cys33, and Cys23–Cys37. A Tryptophan amide modification is found at Trp38.

It belongs to the conotoxin O3 superfamily. Expressed by the venom duct.

It localises to the secreted. The sequence is that of Conotoxin ArMSGL-013 from Conus arenatus (Sand-dusted cone).